We begin with the raw amino-acid sequence, 415 residues long: Gamma-glutamyl phosphate reductase (415 aa).

Belongs to the gamma-glutamyl phosphate reductase family.

The protein resides in the cytoplasm. It carries out the reaction L-glutamate 5-semialdehyde + phosphate + NADP(+) = L-glutamyl 5-phosphate + NADPH + H(+). The protein operates within amino-acid biosynthesis; L-proline biosynthesis; L-glutamate 5-semialdehyde from L-glutamate: step 2/2. Its function is as follows. Catalyzes the NADPH-dependent reduction of L-glutamate 5-phosphate into L-glutamate 5-semialdehyde and phosphate. The product spontaneously undergoes cyclization to form 1-pyrroline-5-carboxylate. This is Gamma-glutamyl phosphate reductase from Listeria welshimeri serovar 6b (strain ATCC 35897 / DSM 20650 / CCUG 15529 / CIP 8149 / NCTC 11857 / SLCC 5334 / V8).